The following is a 920-amino-acid chain: Vacuolar membrane protease (920 aa).

The Cytoplasmic segment spans residues 1–20; sequence MASSRAQRFNPIAFTPWPVT. The helical transmembrane segment at 21 to 41 threads the bilayer; sequence CITTIVYLALLIPILVINLVV. The Vacuolar segment spans residues 42–378; sequence PSAPETNPKG…AFAVFRLHTL (337 aa). Asn53, Asn116, and Asn119 each carry an N-linked (GlcNAc...) asparagine glycan. The Zn(2+) site is built by His175 and Asp187. Catalysis depends on Glu221, which acts as the Proton acceptor. Glu222 lines the Zn(2+) pocket. Asn238 carries an N-linked (GlcNAc...) asparagine glycan. Residues Glu247 and His306 each contribute to the Zn(2+) site. A helical transmembrane segment spans residues 379–399; it reads FAISVALLVIAPLVIFITSVI. The Cytoplasmic portion of the chain corresponds to 400–433; that stretch reads LSKTDRMYLFSMSKSLEGTGDQVSLRGLRGFSRT. The helical transmembrane segment at 434 to 454 threads the bilayer; sequence PIILVIATTIPICLAYLLEKV. The Vacuolar portion of the chain corresponds to 455–463; sequence NPYIVHSSQ. Residues 464-484 traverse the membrane as a helical segment; the sequence is FSVWSMMFSAWIFLAWFLACA. Over 485-495 the chain is Cytoplasmic; sequence ADFFRPSALHR. Residues 496–516 form a helical membrane-spanning segment; it reads AYSYTWIFVATWIMLVINTVY. Residues 517–520 lie on the Vacuolar side of the membrane; sequence ANQK. Residues 521-541 traverse the membrane as a helical segment; that stretch reads GIAAGYFLLFYFAGAFLATWI. Topologically, residues 542-659 are cytoplasmic; that stretch reads SYLELFALPR…TLPRWTWVLQ (118 aa). A disordered region spans residues 556–605; it reads ARQTTGRRPSSLSSRLLTSSADELRSNASPSTAEFPGAAGEDTDPTESTS. Residues 559 to 575 are compositionally biased toward low complexity; sequence TTGRRPSSLSSRLLTSS. A helical membrane pass occupies residues 660 to 680; it reads LLLLAPIVLILVGQLALFLTA. Residues 681 to 693 lie on the Vacuolar side of the membrane; sequence SMCQVGSDGVSTF. Residues 694–714 form a helical membrane-spanning segment; that stretch reads VVYLACAVFTTLLCIPLFPLI. The Cytoplasmic segment spans residues 715–720; the sequence is HRFTYH. Residues 721–741 form a helical membrane-spanning segment; sequence IPTFLFLVFIGTLIYNLVAFP. The Vacuolar segment spans residues 742–920; it reads FSPANRLKTF…VEASHSFTIQ (179 aa). Asn760, Asn788, and Asn832 each carry an N-linked (GlcNAc...) asparagine glycan.

This sequence belongs to the peptidase M28 family. The cofactor is Zn(2+).

The protein resides in the vacuole membrane. Functionally, may be involved in vacuolar sorting and osmoregulation. The chain is Vacuolar membrane protease from Ajellomyces capsulatus (strain H143) (Darling's disease fungus).